We begin with the raw amino-acid sequence, 524 residues long: Light-independent protochlorophyllide reductase subunit B (524 aa).

[4Fe-4S] cluster is bound at residue D36. The active-site Proton donor is D290. Residue 425-426 (GL) coordinates substrate.

The protein belongs to the ChlB/BchB/BchZ family. As to quaternary structure, protochlorophyllide reductase is composed of three subunits; ChlL, ChlN and ChlB. Forms a heterotetramer of two ChlB and two ChlN subunits. [4Fe-4S] cluster serves as cofactor.

It carries out the reaction chlorophyllide a + oxidized 2[4Fe-4S]-[ferredoxin] + 2 ADP + 2 phosphate = protochlorophyllide a + reduced 2[4Fe-4S]-[ferredoxin] + 2 ATP + 2 H2O. The protein operates within porphyrin-containing compound metabolism; chlorophyll biosynthesis (light-independent). Its function is as follows. Component of the dark-operative protochlorophyllide reductase (DPOR) that uses Mg-ATP and reduced ferredoxin to reduce ring D of protochlorophyllide (Pchlide) to form chlorophyllide a (Chlide). This reaction is light-independent. The NB-protein (ChlN-ChlB) is the catalytic component of the complex. The sequence is that of Light-independent protochlorophyllide reductase subunit B from Synechococcus sp. (strain CC9605).